The following is a 93-amino-acid chain: Small ribosomal subunit protein uS19 (93 aa).

The protein belongs to the universal ribosomal protein uS19 family.

Functionally, protein S19 forms a complex with S13 that binds strongly to the 16S ribosomal RNA. The sequence is that of Small ribosomal subunit protein uS19 from Helicobacter acinonychis (strain Sheeba).